A 437-amino-acid polypeptide reads, in one-letter code: Putative galacturan 1,4-alpha-galacturonidase A (437 aa).

The N-terminal stretch at 1 to 20 (MKLSGSSALLLLGFGLLGHA) is a signal peptide. 6 N-linked (GlcNAc...) asparagine glycosylation sites follow: asparagine 30, asparagine 101, asparagine 110, asparagine 161, asparagine 196, and asparagine 203. The PbH1 1 repeat unit spans residues 222 to 243 (SDHVTITNWVYEGGDDAVAFKP). Aspartate 236 (proton donor) is an active-site residue. N-linked (GlcNAc...) asparagine glycans are attached at residues asparagine 244, asparagine 252, asparagine 278, asparagine 324, asparagine 352, asparagine 371, asparagine 382, and asparagine 387. PbH1 repeat units lie at residues 245 to 265 (STNIHVENVTVYGGPGIAFGS), 276 to 302 (VENITVKNANFQPSSQRAMNSGIYFKS), and 322 to 343 (VRNVTVEDITFKDVQLPIYIDT). Cysteine 396 and cysteine 402 are joined by a disulfide.

It belongs to the glycosyl hydrolase 28 family.

It is found in the secreted. It catalyses the reaction [(1-&gt;4)-alpha-D-galacturonosyl](n) + H2O = alpha-D-galacturonate + [(1-&gt;4)-alpha-D-galacturonosyl](n-1). Functionally, specific in hydrolyzing the terminal glycosidic bond of polygalacturonic acid and oligogalacturonates. The protein is Putative galacturan 1,4-alpha-galacturonidase A (rgxA) of Aspergillus flavus (strain ATCC 200026 / FGSC A1120 / IAM 13836 / NRRL 3357 / JCM 12722 / SRRC 167).